The sequence spans 236 residues: 2,3,4,5-tetrahydropyridine-2,6-dicarboxylate N-acetyltransferase (236 aa).

Belongs to the transferase hexapeptide repeat family. DapH subfamily.

The catalysed reaction is (S)-2,3,4,5-tetrahydrodipicolinate + acetyl-CoA + H2O = L-2-acetamido-6-oxoheptanedioate + CoA. It functions in the pathway amino-acid biosynthesis; L-lysine biosynthesis via DAP pathway; LL-2,6-diaminopimelate from (S)-tetrahydrodipicolinate (acetylase route): step 1/3. Functionally, catalyzes the transfer of an acetyl group from acetyl-CoA to tetrahydrodipicolinate. In Listeria ivanovii, this protein is 2,3,4,5-tetrahydropyridine-2,6-dicarboxylate N-acetyltransferase.